An 84-amino-acid chain; its full sequence is Large ribosomal subunit protein bL31B (84 aa).

Belongs to the bacterial ribosomal protein bL31 family. Type B subfamily. As to quaternary structure, part of the 50S ribosomal subunit.

In Rhodococcus erythropolis (strain PR4 / NBRC 100887), this protein is Large ribosomal subunit protein bL31B.